We begin with the raw amino-acid sequence, 320 residues long: Polycomb complex protein BMI-1-A (320 aa).

The RING-type zinc finger occupies 18 to 57; that stretch reads CVLCGGYFIDATTIIECLHSFCKMCIVRYLETSKYCPICD. A Nuclear localization signal motif is present at residues 81-95; that stretch reads KLVPGLFKNEMKRRR. The segment at 234-320 is disordered; it reads ITHPQEGLNN…ALNGSSTSSG (87 aa). The span at 262 to 281 shows a compositional bias: low complexity; the sequence is VPSTSSPLPSPSTLVQPSQP. Over residues 285–304 the composition is skewed to polar residues; that stretch reads HISSPINGTTMTSPNRQFNF.

In terms of assembly, component of a PRC1-like complex. Homodimer. Interacts with cbx2.

The protein resides in the nucleus. Its function is as follows. Component of a Polycomb group (PcG) multiprotein PRC1-like complex, a complex class required to maintain the transcriptionally repressive state of many genes, including Hox genes, throughout development. PcG PRC1 complex acts via chromatin remodeling and modification of histones; it mediates monoubiquitination of histone H2A 'Lys-119', rendering chromatin heritably changed in its expressibility. In the PRC1 complex, it is required to stimulate the E3 ubiquitin-protein ligase activity of rnf2. The polypeptide is Polycomb complex protein BMI-1-A (bmi1a) (Danio rerio (Zebrafish)).